Consider the following 349-residue polypeptide: Anthranilate phosphoribosyltransferase (349 aa).

5-phospho-alpha-D-ribose 1-diphosphate is bound by residues Gly-82, 85 to 86 (GD), 92 to 95 (NVST), 110 to 118 (KHGNRAVSG), and Ser-122. Residue Gly-82 coordinates anthranilate. Ser-94 lines the Mg(2+) pocket. Asn-113 is an anthranilate binding site. Position 168 (Arg-168) interacts with anthranilate. 2 residues coordinate Mg(2+): Asp-227 and Glu-228.

It belongs to the anthranilate phosphoribosyltransferase family. As to quaternary structure, homodimer. Mg(2+) is required as a cofactor.

The enzyme catalyses N-(5-phospho-beta-D-ribosyl)anthranilate + diphosphate = 5-phospho-alpha-D-ribose 1-diphosphate + anthranilate. It functions in the pathway amino-acid biosynthesis; L-tryptophan biosynthesis; L-tryptophan from chorismate: step 2/5. Its function is as follows. Catalyzes the transfer of the phosphoribosyl group of 5-phosphorylribose-1-pyrophosphate (PRPP) to anthranilate to yield N-(5'-phosphoribosyl)-anthranilate (PRA). This is Anthranilate phosphoribosyltransferase from Pseudomonas savastanoi pv. phaseolicola (strain 1448A / Race 6) (Pseudomonas syringae pv. phaseolicola (strain 1448A / Race 6)).